A 486-amino-acid chain; its full sequence is Cobyric acid synthase (486 aa).

The 189-residue stretch at 250-438 (AFRIVVPVPP…LHGMFDTPSA (189 aa)) folds into the GATase cobBQ-type domain. The Nucleophile role is filled by cysteine 331. Histidine 430 is an active-site residue.

It belongs to the CobB/CobQ family. CobQ subfamily.

It participates in cofactor biosynthesis; adenosylcobalamin biosynthesis. Functionally, catalyzes amidations at positions B, D, E, and G on adenosylcobyrinic A,C-diamide. NH(2) groups are provided by glutamine, and one molecule of ATP is hydrogenolyzed for each amidation. The protein is Cobyric acid synthase of Herminiimonas arsenicoxydans.